The sequence spans 615 residues: Dihydroxy-acid dehydratase (615 aa).

Asp81 is a Mg(2+) binding site. Residue Cys122 coordinates [2Fe-2S] cluster. Asp123 and Lys124 together coordinate Mg(2+). Lys124 carries the N6-carboxylysine modification. Cys195 serves as a coordination point for [2Fe-2S] cluster. Glu491 is a Mg(2+) binding site. Ser517 serves as the catalytic Proton acceptor.

The protein belongs to the IlvD/Edd family. As to quaternary structure, homodimer. [2Fe-2S] cluster is required as a cofactor. Requires Mg(2+) as cofactor.

It catalyses the reaction (2R)-2,3-dihydroxy-3-methylbutanoate = 3-methyl-2-oxobutanoate + H2O. It carries out the reaction (2R,3R)-2,3-dihydroxy-3-methylpentanoate = (S)-3-methyl-2-oxopentanoate + H2O. It functions in the pathway amino-acid biosynthesis; L-isoleucine biosynthesis; L-isoleucine from 2-oxobutanoate: step 3/4. It participates in amino-acid biosynthesis; L-valine biosynthesis; L-valine from pyruvate: step 3/4. Its function is as follows. Functions in the biosynthesis of branched-chain amino acids. Catalyzes the dehydration of (2R,3R)-2,3-dihydroxy-3-methylpentanoate (2,3-dihydroxy-3-methylvalerate) into 2-oxo-3-methylpentanoate (2-oxo-3-methylvalerate) and of (2R)-2,3-dihydroxy-3-methylbutanoate (2,3-dihydroxyisovalerate) into 2-oxo-3-methylbutanoate (2-oxoisovalerate), the penultimate precursor to L-isoleucine and L-valine, respectively. This is Dihydroxy-acid dehydratase from Novosphingobium aromaticivorans (strain ATCC 700278 / DSM 12444 / CCUG 56034 / CIP 105152 / NBRC 16084 / F199).